The following is a 1013-amino-acid chain: Dichlorochromopyrrolate synthase (1013 aa).

The protein belongs to the RebD family. In terms of assembly, homodimer. Heme is required as a cofactor.

The catalysed reaction is 2 3-(7-chloroindol-3-yl)-2-iminopropanoate + H2O2 = dichlorochromopyrrolate + NH4(+) + 2 H2O + H(+). It catalyses the reaction 2 2-iminio-3-(indol-3-yl)propanoate + H2O2 = chromopyrrolate + NH4(+) + 2 H2O + H(+). It carries out the reaction 2 H2O2 = O2 + 2 H2O. Involved in the biosynthesis of the indolocarbazole antitumor agent rebeccamycin. Catalyzes the hydrogen peroxide-dependent dimerization of two L-tryptophan-derived molecules (imine form of indole 3-pyruvate (IPA)), to form dichlorochromopyrrolic acid (CPA), the precursor for the six-ring bisindolopyrrolocarbazole scaffold of the rebeccamycin. The hydrogen peroxide is provided together with iminoindolpropanoate by RebO. Due to the instability of indole 3-pyruvate (IPA), which is hydrolyzed in solution and exits in equilibrium with the predominant ketone form of IPA, the concerted functioning of the RebO/RebD system appears to prevent the buildup of significant amounts of IPA and its imine in solution, effectively shepherding the imine further down the biosynthetic chain. The sequence is that of Dichlorochromopyrrolate synthase (rebD) from Lentzea aerocolonigenes (Lechevalieria aerocolonigenes).